A 285-amino-acid chain; its full sequence is uncharacterized protein (285 aa).

One can recognise a Guanylate cyclase domain in the interval 92-199; it reads TLLLADVEES…PTINRTARLR (108 aa).

The protein belongs to the adenylyl cyclase class-4/guanylyl cyclase family.

This is an uncharacterized protein from Mycobacterium tuberculosis (strain CDC 1551 / Oshkosh).